The following is a 142-amino-acid chain: Transcriptional regulator MraZ (142 aa).

SpoVT-AbrB domains are found at residues 5–51 and 77–120; these read ASAL…PRPE and AADV…DAAT.

Belongs to the MraZ family. Forms oligomers.

Its subcellular location is the cytoplasm. It is found in the nucleoid. This is Transcriptional regulator MraZ from Ralstonia pickettii (strain 12J).